Here is a 101-residue protein sequence, read N- to C-terminus: Small ribosomal subunit protein uS14 (101 aa).

Belongs to the universal ribosomal protein uS14 family. As to quaternary structure, part of the 30S ribosomal subunit. Contacts proteins S3 and S10.

Its function is as follows. Binds 16S rRNA, required for the assembly of 30S particles and may also be responsible for determining the conformation of the 16S rRNA at the A site. This Rhizobium etli (strain CIAT 652) protein is Small ribosomal subunit protein uS14.